The sequence spans 312 residues: MTIKRKKVSVIGAGFTGATTAFLLAQKELADVVLVDIPQLENPTKGKALDMLEASPVQGFDANIIGTSDYADTADSDVVIITAGIARKPGMSRDDLVATNSKIMKSVTKEIAKHSPDTIIIVLTNPVDAMTYSVFKEAGFPKERVIGQSGVLDTARFRTFIAQELNLSVKDITGFVLGGHGDDMVPLVRYSYAGGIPLETLISKERLDAIVERTRKGGGEIVNLLGNGSAYYAPAASLVEMTEAILKDQRRVLPAIAYLEGEYGYRDLYLGVPVILGGNGIEKVIELELREEEKMALDRSVESVRNVMEILS.

NAD(+) is bound by residues 12-17 and Asp-36; that span reads GAGFTG. Substrate is bound by residues Arg-87 and Arg-93. Residues Asn-100 and 123 to 125 each bind NAD(+); that span reads LTN. Asn-125 serves as a coordination point for substrate. Position 149 is a phosphoserine (Ser-149). Arg-156 provides a ligand contact to substrate. His-180 acts as the Proton acceptor in catalysis.

Belongs to the LDH/MDH superfamily. MDH type 3 family.

It carries out the reaction (S)-malate + NAD(+) = oxaloacetate + NADH + H(+). Its function is as follows. Catalyzes the reversible oxidation of malate to oxaloacetate. This is Malate dehydrogenase from Bacillus cytotoxicus (strain DSM 22905 / CIP 110041 / 391-98 / NVH 391-98).